The following is a 136-amino-acid chain: Small ribosomal subunit protein uS8c (136 aa).

The protein belongs to the universal ribosomal protein uS8 family. As to quaternary structure, part of the 30S ribosomal subunit.

It localises to the plastid. The protein resides in the chloroplast. In terms of biological role, one of the primary rRNA binding proteins, it binds directly to 16S rRNA central domain where it helps coordinate assembly of the platform of the 30S subunit. The chain is Small ribosomal subunit protein uS8c (rps8) from Citrus sinensis (Sweet orange).